Consider the following 299-residue polypeptide: Oxygen-dependent coproporphyrinogen-III oxidase (299 aa).

Ser92 serves as a coordination point for substrate. A divalent metal cation-binding residues include His96 and His106. Catalysis depends on His106, which acts as the Proton donor. 108–110 (NVR) serves as a coordination point for substrate. A divalent metal cation is bound by residues His145 and His175. The important for dimerization stretch occupies residues 240-275 (YVEFNLVWDRGTLFGLQTGGRTESILMSMPPLVRWE). 258–260 (GGR) provides a ligand contact to substrate.

The protein belongs to the aerobic coproporphyrinogen-III oxidase family. Homodimer. The cofactor is a divalent metal cation.

The protein resides in the cytoplasm. The catalysed reaction is coproporphyrinogen III + O2 + 2 H(+) = protoporphyrinogen IX + 2 CO2 + 2 H2O. It participates in porphyrin-containing compound metabolism; protoporphyrin-IX biosynthesis; protoporphyrinogen-IX from coproporphyrinogen-III (O2 route): step 1/1. Its function is as follows. Involved in the heme biosynthesis. Catalyzes the aerobic oxidative decarboxylation of propionate groups of rings A and B of coproporphyrinogen-III to yield the vinyl groups in protoporphyrinogen-IX. In Shigella boydii serotype 18 (strain CDC 3083-94 / BS512), this protein is Oxygen-dependent coproporphyrinogen-III oxidase.